Consider the following 632-residue polypeptide: Signal-transduction and transcriptional-control protein (632 aa).

Residues 197–270 enclose the PAS domain; it reads TYQYLNKITD…GQSYEDEEIM (74 aa). In terms of domain architecture, Sigma-54 factor interaction spans 324–554; the sequence is IIGQSEAMKR…LENCIENIVN (231 aa). ATP is bound by residues 352-359 and 416-425; these read GESGTGKE and ANEGTLFLDE. Positions 606–625 form a DNA-binding region, H-T-H motif; it reads ISKACRILGINRSTLYIKIK.

This Clostridium beijerinckii (Clostridium MP) protein is Signal-transduction and transcriptional-control protein (stc).